Here is a 188-residue protein sequence, read N- to C-terminus: Elongation factor P (188 aa).

The protein belongs to the elongation factor P family.

It localises to the cytoplasm. It participates in protein biosynthesis; polypeptide chain elongation. Functionally, involved in peptide bond synthesis. Stimulates efficient translation and peptide-bond synthesis on native or reconstituted 70S ribosomes in vitro. Probably functions indirectly by altering the affinity of the ribosome for aminoacyl-tRNA, thus increasing their reactivity as acceptors for peptidyl transferase. The chain is Elongation factor P from Saccharopolyspora erythraea (strain ATCC 11635 / DSM 40517 / JCM 4748 / NBRC 13426 / NCIMB 8594 / NRRL 2338).